The chain runs to 804 residues: Elongation factor G, mitochondrial (804 aa).

The N-terminal 63 residues, 1–63 (MSMHRVARAV…RHFFQSPIIR (63 aa)), are a transit peptide targeting the mitochondrion. Residues 99-385 (RRVRNIGIAA…AVCDYLPNPA (287 aa)) enclose the tr-type G domain. GTP-binding positions include 108-115 (AHIDSGKT), 183-187 (DTPGH), and 237-240 (NKMD).

It belongs to the TRAFAC class translation factor GTPase superfamily. Classic translation factor GTPase family. EF-G/EF-2 subfamily.

The protein resides in the mitochondrion. The protein operates within protein biosynthesis; polypeptide chain elongation. Functionally, mitochondrial GTPase that catalyzes the GTP-dependent ribosomal translocation step during translation elongation. During this step, the ribosome changes from the pre-translocational (PRE) to the post-translocational (POST) state as the newly formed A-site-bound peptidyl-tRNA and P-site-bound deacylated tRNA move to the P and E sites, respectively. Catalyzes the coordinated movement of the two tRNA molecules, the mRNA and conformational changes in the ribosome. The chain is Elongation factor G, mitochondrial (mef1) from Sclerotinia sclerotiorum (strain ATCC 18683 / 1980 / Ss-1) (White mold).